Here is a 155-residue protein sequence, read N- to C-terminus: Small ribosomal subunit protein uS7cz/uS7cy (155 aa).

It belongs to the universal ribosomal protein uS7 family. As to quaternary structure, part of the 30S ribosomal subunit.

Its subcellular location is the plastid. The protein localises to the chloroplast. In terms of biological role, one of the primary rRNA binding proteins, it binds directly to 16S rRNA where it nucleates assembly of the head domain of the 30S subunit. This chain is Small ribosomal subunit protein uS7cz/uS7cy (rps7-A), found in Lotus japonicus (Lotus corniculatus var. japonicus).